The sequence spans 240 residues: MMKFVASEISSIMELQMRSEPISSSNRATKRTISSSSSSSSSSAGFDSYCVSLAVGPLWWSDVPQSRTDHDRASPLKEYNRKTSIDSTTTASSEFTDYDDTESTVEFMNQHEAAVIQEVLNQPTPTQISLKLFVTPQKYSVWETVFNPLDNILYVNLPSTMTHEASKHSFISLLEFAEEKLECDAVVLCIRKDRLDRPNLVRTFSFVGFQPVSPKSPLAPPHIEEQQKNDYLFMIYNIEE.

2 disordered regions span residues 18 to 45 and 69 to 95; these read RSEP…SSAG and DHDR…SSEF. Positions 21–33 are enriched in polar residues; the sequence is PISSSNRATKRTI. The span at 34–43 shows a compositional bias: low complexity; that stretch reads SSSSSSSSSS. Positions 69–84 are enriched in basic and acidic residues; that stretch reads DHDRASPLKEYNRKTS. The segment covering 85–95 has biased composition (polar residues); the sequence is IDSTTTASSEF.

This sequence belongs to the ODC antizyme family. Interacts with ODC1 and thereby sterically blocks ODC homodimerization. Preferentially expressed in adult female midguts.

Functionally, ornithine decarboxylase (ODC) antizyme protein that negatively regulates ODC activity and intracellular polyamine biosynthesis and uptake in response to increased intracellular polyamine levels. Binds to ODC monomers, inhibiting the assembly of the functional ODC homodimer, and targets the monomers for ubiquitin-independent proteolytic destruction by the 26S proteasome. In Aedes aegypti (Yellowfever mosquito), this protein is Ornithine decarboxylase antizyme (Oda).